The chain runs to 347 residues: NADH-ubiquinone oxidoreductase chain 2 (347 aa).

Helical transmembrane passes span Pro-3–Ser-23, His-25–Met-45, Tyr-59–Met-79, Met-96–Pro-116, Ile-122–Leu-142, Ile-149–Gly-169, Ser-201–Phe-221, Ile-239–Gly-259, Asn-274–Ile-294, and Ile-326–Leu-346.

Belongs to the complex I subunit 2 family. Core subunit of respiratory chain NADH dehydrogenase (Complex I) which is composed of 45 different subunits. Interacts with TMEM242.

It is found in the mitochondrion inner membrane. The catalysed reaction is a ubiquinone + NADH + 5 H(+)(in) = a ubiquinol + NAD(+) + 4 H(+)(out). Its function is as follows. Core subunit of the mitochondrial membrane respiratory chain NADH dehydrogenase (Complex I) that is believed to belong to the minimal assembly required for catalysis. Complex I functions in the transfer of electrons from NADH to the respiratory chain. The immediate electron acceptor for the enzyme is believed to be ubiquinone. The chain is NADH-ubiquinone oxidoreductase chain 2 from Crocidura hildegardeae (Hildegarde's shrew).